The primary structure comprises 376 residues: Succinyl-diaminopimelate desuccinylase (376 aa).

Residue His-67 participates in Zn(2+) binding. The active site involves Asp-69. Asp-100 is a Zn(2+) binding site. Catalysis depends on Glu-134, which acts as the Proton acceptor. Zn(2+) contacts are provided by Glu-135, Glu-163, and His-349.

Belongs to the peptidase M20A family. DapE subfamily. Homodimer. Zn(2+) is required as a cofactor. Co(2+) serves as cofactor.

The catalysed reaction is N-succinyl-(2S,6S)-2,6-diaminopimelate + H2O = (2S,6S)-2,6-diaminopimelate + succinate. Its pathway is amino-acid biosynthesis; L-lysine biosynthesis via DAP pathway; LL-2,6-diaminopimelate from (S)-tetrahydrodipicolinate (succinylase route): step 3/3. Functionally, catalyzes the hydrolysis of N-succinyl-L,L-diaminopimelic acid (SDAP), forming succinate and LL-2,6-diaminopimelate (DAP), an intermediate involved in the bacterial biosynthesis of lysine and meso-diaminopimelic acid, an essential component of bacterial cell walls. This chain is Succinyl-diaminopimelate desuccinylase, found in Pseudoalteromonas translucida (strain TAC 125).